We begin with the raw amino-acid sequence, 202 residues long: Small ribosomal subunit protein uS4 (202 aa).

The S4 RNA-binding domain maps to 91-157 (CRLDNVVYRA…TPFIVARETH (67 aa)).

This sequence belongs to the universal ribosomal protein uS4 family. Part of the 30S ribosomal subunit. Contacts protein S5. The interaction surface between S4 and S5 is involved in control of translational fidelity.

In terms of biological role, one of the primary rRNA binding proteins, it binds directly to 16S rRNA where it nucleates assembly of the body of the 30S subunit. Functionally, with S5 and S12 plays an important role in translational accuracy. This chain is Small ribosomal subunit protein uS4, found in Nocardioides sp. (strain ATCC BAA-499 / JS614).